Reading from the N-terminus, the 432-residue chain is Transcriptional adapter 3-B (432 aa).

Disordered stretches follow at residues 90 to 124 and 275 to 315; these read HELG…PKSR and SPVE…KSLE. Polar residues predominate over residues 293–305; it reads DGASTSPRSQNKP. Residues 335–398 adopt a coiled-coil conformation; that stretch reads ADDSEDEVLA…NEVMDAFRKI (64 aa).

Belongs to the NGG1 family.

Its subcellular location is the nucleus. Functionally, functions as a component of the PCAF complex. The PCAF complex is capable of efficiently acetylating histones in a nucleosomal context. The sequence is that of Transcriptional adapter 3-B (tada3-b) from Xenopus laevis (African clawed frog).